A 650-amino-acid polypeptide reads, in one-letter code: Chaperone protein DnaK (650 aa).

Thr200 bears the Phosphothreonine; by autocatalysis mark. The interval 614–634 (AGAAGAAGAAEGAAHAGGAQQ) is disordered.

The protein belongs to the heat shock protein 70 family.

Functionally, acts as a chaperone. This chain is Chaperone protein DnaK, found in Burkholderia cenocepacia (strain ATCC BAA-245 / DSM 16553 / LMG 16656 / NCTC 13227 / J2315 / CF5610) (Burkholderia cepacia (strain J2315)).